The sequence spans 442 residues: Adenylosuccinate synthetase (442 aa).

GTP is bound by residues 30 to 36 (GDEGKGK) and 58 to 60 (GHT). Residue Asp31 is the Proton acceptor of the active site. Residues Asp31 and Gly58 each coordinate Mg(2+). IMP contacts are provided by residues 31–34 (DEGK), 56–59 (NAGH), Thr148, Arg162, Asn241, Thr256, and Arg320. His59 functions as the Proton donor in the catalytic mechanism. 316 to 322 (TTTGRRR) is a binding site for substrate. Residues Arg322, 348-350 (KLD), and 430-432 (GVG) each bind GTP.

Belongs to the adenylosuccinate synthetase family. Homodimer. Mg(2+) is required as a cofactor.

It is found in the cytoplasm. The enzyme catalyses IMP + L-aspartate + GTP = N(6)-(1,2-dicarboxyethyl)-AMP + GDP + phosphate + 2 H(+). The protein operates within purine metabolism; AMP biosynthesis via de novo pathway; AMP from IMP: step 1/2. Its function is as follows. Plays an important role in the de novo pathway and in the salvage pathway of purine nucleotide biosynthesis. Catalyzes the first committed step in the biosynthesis of AMP from IMP. This is Adenylosuccinate synthetase from Trichoplax adhaerens (Trichoplax reptans).